Reading from the N-terminus, the 96-residue chain is MSKSAVSPSEARRWYVRGRVQGVGYRDFAQRAAVQLGLTGYARNLDDGRVEVYAVGPPSKLSELAGMLYRGPRWSDVRGIEEQEAAITSYDSFRIR.

Residues 11–96 (ARRWYVRGRV…ITSYDSFRIR (86 aa)) form the Acylphosphatase-like domain. Catalysis depends on residues Arg26 and Asn44.

It belongs to the acylphosphatase family.

The catalysed reaction is an acyl phosphate + H2O = a carboxylate + phosphate + H(+). The chain is Acylphosphatase (acyP) from Solibacter usitatus (strain Ellin6076).